The primary structure comprises 264 residues: 3-methyl-2-oxobutanoate hydroxymethyltransferase (264 aa).

Aspartate 45 and aspartate 84 together coordinate Mg(2+). 3-methyl-2-oxobutanoate-binding positions include 45–46, aspartate 84, and lysine 112; that span reads DS. Glutamate 114 provides a ligand contact to Mg(2+). Glutamate 181 (proton acceptor) is an active-site residue.

It belongs to the PanB family. As to quaternary structure, homodecamer; pentamer of dimers. The cofactor is Mg(2+).

The protein localises to the cytoplasm. It catalyses the reaction 3-methyl-2-oxobutanoate + (6R)-5,10-methylene-5,6,7,8-tetrahydrofolate + H2O = 2-dehydropantoate + (6S)-5,6,7,8-tetrahydrofolate. It functions in the pathway cofactor biosynthesis; (R)-pantothenate biosynthesis; (R)-pantoate from 3-methyl-2-oxobutanoate: step 1/2. Catalyzes the reversible reaction in which hydroxymethyl group from 5,10-methylenetetrahydrofolate is transferred onto alpha-ketoisovalerate to form ketopantoate. This is 3-methyl-2-oxobutanoate hydroxymethyltransferase from Escherichia coli O127:H6 (strain E2348/69 / EPEC).